We begin with the raw amino-acid sequence, 378 residues long: Ribosomal RNA large subunit methyltransferase G (378 aa).

It belongs to the methyltransferase superfamily. RlmG family.

The protein resides in the cytoplasm. It catalyses the reaction guanosine(1835) in 23S rRNA + S-adenosyl-L-methionine = N(2)-methylguanosine(1835) in 23S rRNA + S-adenosyl-L-homocysteine + H(+). Functionally, specifically methylates the guanine in position 1835 (m2G1835) of 23S rRNA. This chain is Ribosomal RNA large subunit methyltransferase G, found in Salmonella gallinarum (strain 287/91 / NCTC 13346).